The sequence spans 75 residues: U6-lycotoxin-Ls1e (75 aa).

Positions 1–21 are cleaved as a signal peptide; the sequence is MKLLLFTALVLVVISLIEVEA. A propeptide spanning residues 22-25 is cleaved from the precursor; the sequence is ENER.

The protein belongs to the neurotoxin 19 (CSTX) family. 06 (U6-Lctx) subfamily. Contains 4 disulfide bonds. As to expression, expressed by the venom gland.

It is found in the secreted. The chain is U6-lycotoxin-Ls1e from Lycosa singoriensis (Wolf spider).